The following is a 461-amino-acid chain: Putative aldehyde dehydrogenase FUS7 (461 aa).

220–225 (GSTTTG) is an NAD(+) binding site. Residues E242 and C276 contribute to the active site.

This sequence belongs to the aldehyde dehydrogenase family.

It catalyses the reaction an aldehyde + NAD(+) + H2O = a carboxylate + NADH + 2 H(+). In terms of biological role, putative aldehyde dehydrogenase; part of the gene cluster that mediates the biosynthesis of the mycotoxin fusarin C. Within the cluster, FUS1, FUS2, FUS8 and FUS9 are sufficient for fusarin production. The other FUS cluster members are not essential for fusarin C biosynthesis. The sequence is that of Putative aldehyde dehydrogenase FUS7 from Gibberella fujikuroi (strain CBS 195.34 / IMI 58289 / NRRL A-6831) (Bakanae and foot rot disease fungus).